We begin with the raw amino-acid sequence, 33 residues long: Mytimycin (33 aa).

The protein localises to the secreted. Its function is as follows. Has antifungal activity against N.crassa and F.culmorum. This chain is Mytimycin, found in Mytilus edulis (Blue mussel).